Here is a 216-residue protein sequence, read N- to C-terminus: Uracil phosphoribosyltransferase (216 aa).

Residues R85, R110, and D135–S143 contribute to the 5-phospho-alpha-D-ribose 1-diphosphate site. Residues I200 and G205 to A207 each bind uracil. Position 206 (D206) interacts with 5-phospho-alpha-D-ribose 1-diphosphate.

The protein belongs to the UPRTase family. The cofactor is Mg(2+).

It carries out the reaction UMP + diphosphate = 5-phospho-alpha-D-ribose 1-diphosphate + uracil. It participates in pyrimidine metabolism; UMP biosynthesis via salvage pathway; UMP from uracil: step 1/1. With respect to regulation, allosterically activated by GTP. In terms of biological role, catalyzes the conversion of uracil and 5-phospho-alpha-D-ribose 1-diphosphate (PRPP) to UMP and diphosphate. The sequence is that of Uracil phosphoribosyltransferase from Burkholderia pseudomallei (strain 668).